A 369-amino-acid polypeptide reads, in one-letter code: 2-aminoethylphosphonate--pyruvate transaminase (369 aa).

Position 193 is an N6-(pyridoxal phosphate)lysine (Lys193).

This sequence belongs to the class-V pyridoxal-phosphate-dependent aminotransferase family. PhnW subfamily. In terms of assembly, homodimer. Pyridoxal 5'-phosphate is required as a cofactor.

It carries out the reaction (2-aminoethyl)phosphonate + pyruvate = phosphonoacetaldehyde + L-alanine. Its function is as follows. Involved in phosphonate degradation. The sequence is that of 2-aminoethylphosphonate--pyruvate transaminase from Burkholderia pseudomallei (strain K96243).